The primary structure comprises 356 residues: Terpene synthase 10 (356 aa).

The short motif at 90–95 is the DDxx(x)D/E motif element; the sequence is DDYLDS. Residues 232-240 carry the NDxxSxxxD/E motif motif; that stretch reads NDAVSYAKE.

It belongs to the terpene synthase family.

It catalyses the reaction geranylgeranyl diphosphate = beta-araneosene + diphosphate. In terms of biological role, terpene synthase that converts its substrate farnesyl diphosphate (FPP) into several unidentified sesquiterpenes. TPS10 also converts geranylgeranyl diphosphate (GGPP) into the diterpene beta-araneosene. The protein is Terpene synthase 10 of Dictyostelium purpureum (Slime mold).